The chain runs to 305 residues: Methionyl-tRNA formyltransferase (305 aa).

110 to 113 (SLLP) provides a ligand contact to (6S)-5,6,7,8-tetrahydrofolate.

This sequence belongs to the Fmt family.

It carries out the reaction L-methionyl-tRNA(fMet) + (6R)-10-formyltetrahydrofolate = N-formyl-L-methionyl-tRNA(fMet) + (6S)-5,6,7,8-tetrahydrofolate + H(+). Its function is as follows. Attaches a formyl group to the free amino group of methionyl-tRNA(fMet). The formyl group appears to play a dual role in the initiator identity of N-formylmethionyl-tRNA by promoting its recognition by IF2 and preventing the misappropriation of this tRNA by the elongation apparatus. This Ureaplasma urealyticum serovar 10 (strain ATCC 33699 / Western) protein is Methionyl-tRNA formyltransferase.